Here is a 419-residue protein sequence, read N- to C-terminus: Multiple organellar RNA editing factor 1, mitochondrial (419 aa).

The N-terminal 60 residues, 1–60, are a transit peptide targeting the mitochondrion; sequence MAMISHRLRRALLTATSYVNRSISSSITPASDFPSVSAAVLKRSVIGRSTEVATRAPARL. The disordered stretch occupies residues 174-401; it reads KEYGGDKYEN…AGQPGSDQVR (228 aa). The segment covering 237-252 has biased composition (low complexity); the sequence is GPQQGYATPGQGQGTQ. Residues 310 to 327 show a composition bias toward gly residues; that stretch reads GQGGSGNYSQGPQGGYNQ. Residues 342-356 show a composition bias toward low complexity; that stretch reads GPASGAGNLGPAPGA. Residues 357–367 show a composition bias toward gly residues; sequence GNPGYGQGYSG. Residues 371–401 are compositionally biased toward polar residues; sequence EQNQTFPQADQRNRDWNNNNPAGQPGSDQVR.

The protein belongs to the MORF family. Homodimer and heterodimer with MORF3. Heterodimers with MORF8/RIP1, MORF4/RIP4 and MORF6/RIP6. Interacts with PCMP-E90/MEF13. Interacts with PCMP-H13/MEF35.

The protein localises to the mitochondrion. Its function is as follows. Involved in organellar RNA editing. Required for the processing of numerous RNA editing sites in mitochondria. Binds to the mitochondrial MEF19 and MEF21 factors, two pentatricopeptide repeat-containing proteins involved in RNA editing. In Arabidopsis thaliana (Mouse-ear cress), this protein is Multiple organellar RNA editing factor 1, mitochondrial.